The primary structure comprises 530 residues: Histone-arginine methyltransferase CARMER (530 aa).

The region spanning 141–450 (ASQYFQFYGY…QSYDVTIDLH (310 aa)) is the SAM-dependent MTase PRMT-type domain. Residues Gln-154, Arg-163, Gly-187, Glu-209, Glu-238, and Thr-266 each contribute to the S-adenosyl-L-methionine site. Arg-501 bears the Asymmetric dimethylarginine; by autocatalysis mark.

It belongs to the class I-like SAM-binding methyltransferase superfamily. Protein arginine N-methyltransferase family. In terms of assembly, homodimer. The dimethylated protein is the major form.

It is found in the cytoplasm. The protein resides in the nucleus. The enzyme catalyses L-arginyl-[protein] + 2 S-adenosyl-L-methionine = N(omega),N(omega)-dimethyl-L-arginyl-[protein] + 2 S-adenosyl-L-homocysteine + 2 H(+). In terms of biological role, methylates (mono- and asymmetric dimethylation) the guanidino nitrogens of arginyl residues in proteins. May methylate histone H3 at 'Arg-17' and activate transcription via chromatin remodeling. The polypeptide is Histone-arginine methyltransferase CARMER (Art4) (Drosophila simulans (Fruit fly)).